A 24-amino-acid chain; its full sequence is Brevinin-1Ra (24 aa).

An intrachain disulfide couples Cys18 to Cys24.

In terms of tissue distribution, expressed by the skin glands.

It localises to the secreted. Antimicrobial peptide. In Pelophylax ridibundus (Marsh frog), this protein is Brevinin-1Ra.